The primary structure comprises 559 residues: NAD(P)H-quinone oxidoreductase chain 4-2 (559 aa).

14 helical membrane-spanning segments follow: residues 5-25 (FPWL…IPLI), 35-55 (WYAL…FWTN), 86-106 (ISMP…FAAW), 114-134 (LFYF…VAQD), 136-156 (LLLF…VCIW), 168-188 (FLLY…GLAF), 207-227 (IALE…KLAI), 242-262 (SAPV…YGLI), 274-294 (VYFA…GGFS), 310-330 (VSHM…GISG), 331-351 (AMLQ…LAGV), 374-394 (VFAL…MSGF), 417-437 (VTVF…LSML), and 488-508 (VFIA…PKLA).

This sequence belongs to the complex I subunit 4 family.

Its subcellular location is the cellular thylakoid membrane. The enzyme catalyses a plastoquinone + NADH + (n+1) H(+)(in) = a plastoquinol + NAD(+) + n H(+)(out). It catalyses the reaction a plastoquinone + NADPH + (n+1) H(+)(in) = a plastoquinol + NADP(+) + n H(+)(out). In terms of biological role, NDH-1 shuttles electrons from NAD(P)H, via FMN and iron-sulfur (Fe-S) centers, to quinones in the respiratory chain. The immediate electron acceptor for the enzyme in this species is believed to be plastoquinone. Couples the redox reaction to proton translocation (for every two electrons transferred, four hydrogen ions are translocated across the cytoplasmic membrane), and thus conserves the redox energy in a proton gradient. The protein is NAD(P)H-quinone oxidoreductase chain 4-2 (ndhD2) of Synechocystis sp. (strain ATCC 27184 / PCC 6803 / Kazusa).